A 236-amino-acid chain; its full sequence is Acetate--CoA ligase [ADP-forming] II subunit beta (236 aa).

Positions 26–62 (KQVLKAYGLPVPEEKLAKTLDEALKYAEEIGYPVAMK) constitute an ATP-grasp domain. 52–63 (AEEIGYPVAMKL) serves as a coordination point for ATP.

Belongs to the acetate CoA ligase beta subunit family. In terms of assembly, heterotetramer of two alpha and two beta subunits.

It carries out the reaction acetate + ATP + CoA = acetyl-CoA + ADP + phosphate. Functionally, catalyzes the reversible formation of acetate and ATP from acetyl-CoA by using ADP and phosphate. Can use other substrates such as phenylacetyl-CoA, indoleacetyl-CoA and isobutyryl-CoA, but not succinyl-CoA. Seems to be involved primarily in the degradation of aryl-CoA esters to the corresponding acids. Participates in the conversion of acetyl-CoA to acetate and in the degradation of branched-chain amino acids via branched-chain-acyl-CoA esters. This is Acetate--CoA ligase [ADP-forming] II subunit beta from Pyrococcus furiosus (strain ATCC 43587 / DSM 3638 / JCM 8422 / Vc1).